We begin with the raw amino-acid sequence, 236 residues long: 2,3,4,5-tetrahydropyridine-2,6-dicarboxylate N-acetyltransferase (236 aa).

This sequence belongs to the transferase hexapeptide repeat family. DapH subfamily.

The catalysed reaction is (S)-2,3,4,5-tetrahydrodipicolinate + acetyl-CoA + H2O = L-2-acetamido-6-oxoheptanedioate + CoA. It participates in amino-acid biosynthesis; L-lysine biosynthesis via DAP pathway; LL-2,6-diaminopimelate from (S)-tetrahydrodipicolinate (acetylase route): step 1/3. Catalyzes the transfer of an acetyl group from acetyl-CoA to tetrahydrodipicolinate. This is 2,3,4,5-tetrahydropyridine-2,6-dicarboxylate N-acetyltransferase from Clostridium perfringens (strain SM101 / Type A).